Here is a 356-residue protein sequence, read N- to C-terminus: tRNA N6-adenosine threonylcarbamoyltransferase (356 aa).

Fe cation-binding residues include histidine 115 and histidine 119. Residues 138 to 142 (LVSGG), aspartate 171, glycine 184, and asparagine 283 each bind substrate. Aspartate 311 provides a ligand contact to Fe cation.

Belongs to the KAE1 / TsaD family. Fe(2+) is required as a cofactor.

The protein localises to the cytoplasm. The catalysed reaction is L-threonylcarbamoyladenylate + adenosine(37) in tRNA = N(6)-L-threonylcarbamoyladenosine(37) in tRNA + AMP + H(+). In terms of biological role, required for the formation of a threonylcarbamoyl group on adenosine at position 37 (t(6)A37) in tRNAs that read codons beginning with adenine. Is involved in the transfer of the threonylcarbamoyl moiety of threonylcarbamoyl-AMP (TC-AMP) to the N6 group of A37, together with TsaE and TsaB. TsaD likely plays a direct catalytic role in this reaction. The polypeptide is tRNA N6-adenosine threonylcarbamoyltransferase (Prochlorococcus marinus (strain MIT 9313)).